The following is a 341-amino-acid chain: D-aspartate oxidase (341 aa).

The residue at position 1 (methionine 1) is a Blocked amino end (Met). FAD-binding residues include aspartate 36, lysine 37, threonine 43, serine 44, methionine 50, glycine 307, and isoleucine 311. Positions 339 to 341 (SKL) match the Microbody targeting signal motif.

Belongs to the DAMOX/DASOX family. As to quaternary structure, monomer. Interacts with PEX5; the interaction is direct and required for localization of DDO to the peroxisome. FAD is required as a cofactor. As to expression, in the kidney, expressed in epithelial cells of the proximal tubules and in the liver (at protein level).

Its subcellular location is the peroxisome matrix. The protein localises to the cytoplasm. It localises to the cytosol. The catalysed reaction is D-aspartate + O2 + H2O = oxaloacetate + H2O2 + NH4(+). It carries out the reaction D-glutamate + O2 + H2O = H2O2 + 2-oxoglutarate + NH4(+). Its activity is regulated as follows. Inhibited by phenylglyoxal; chemical modification of arginine residues in the enzyme with phenylglyoxal leads to the irreversible loss of activity towards dicarboxylic D-amino acids, paralleled by a transient appearance of activity versus monocarboxylic ones. Selectively catalyzes the oxidative deamination of acidic amino acids. Suppresses the level of D-aspartate in the brain, an amino acid that can act as an agonist for glutamate receptors. Protects the organism from the toxicity of D-amino acids. May also function in the intestine. This Bos taurus (Bovine) protein is D-aspartate oxidase (DDO).